The chain runs to 444 residues: Alanyl-tRNA editing protein Aarsd1 (444 aa).

His109 and His113 together coordinate Zn(2+). Residue Ser174 is modified to Phosphoserine. Zn(2+) is bound by residues Cys209 and His213.

Belongs to the class-II aminoacyl-tRNA synthetase family. Alax-L subfamily. Zn(2+) serves as cofactor.

It localises to the cytoplasm. In terms of biological role, functions in trans to edit the amino acid moiety from incorrectly charged tRNA(Ala). This Bos taurus (Bovine) protein is Alanyl-tRNA editing protein Aarsd1 (AARSD1).